We begin with the raw amino-acid sequence, 407 residues long: Arginine deiminase (407 aa).

The Amidino-cysteine intermediate role is filled by Cys-397.

It belongs to the arginine deiminase family.

The protein localises to the cytoplasm. The catalysed reaction is L-arginine + H2O = L-citrulline + NH4(+). The protein operates within amino-acid degradation; L-arginine degradation via ADI pathway; carbamoyl phosphate from L-arginine: step 1/2. This Pediococcus pentosaceus (strain ATCC 25745 / CCUG 21536 / LMG 10740 / 183-1w) protein is Arginine deiminase.